The following is a 517-amino-acid chain: FERM domain-containing protein 5 (517 aa).

In terms of domain architecture, FERM spans 17–298 (YSCTVRLLDD…ENQAFYKLEK (282 aa)). Positions 308–353 (SNLFFKGSRFRYSGRVAKEVMESSAKIKREPPEIHRAGMVPSRSCP) are interaction with ROCK1. Residues 344-367 (AGMVPSRSCPSITHGPRLSSVPRT) are disordered. Position 375 is a phosphoserine (S375). Disordered stretches follow at residues 385–408 (DSAH…VRSS) and 485–517 (GHGG…VPLD). Residues 388–398 (HSTPVRSSSHG) are compositionally biased toward polar residues. Positions 498–517 (KGPQLQQQQWKGWGKSVPLD) are enriched in low complexity.

In terms of assembly, interacts with CTNND1, ITGB5 (via cytoplasmic domain) and ROCK1.

The protein resides in the cell junction. Its subcellular location is the adherens junction. In terms of biological role, may be involved in regulation of cell migration. May regulate cell-matrix interactions via its interaction with ITGB5 and modifying ITGB5 cytoplasmic tail interactions such as with FERMT2 and TLN1. May regulate ROCK1 kinase activity possibly involved in regulation of actin stress fiber formation. The chain is FERM domain-containing protein 5 (Frmd5) from Mus musculus (Mouse).